Here is an 811-residue protein sequence, read N- to C-terminus: Abnormal pharyngeal pumping eat-20 (811 aa).

An N-terminal signal peptide occupies residues 1-20; sequence MTTFCRVLLIFGIYVAVSCA. Residues 21-749 lie on the Extracellular side of the membrane; the sequence is QSVEDDVFHF…GKQSSAVASW (729 aa). Asparagine 90, asparagine 171, and asparagine 232 each carry an N-linked (GlcNAc...) asparagine glycan. 3 consecutive EGF-like domains span residues 220-257, 258-293, and 301-335; these read PPSP…DRCE, LDVC…LLCE, and AAPI…ANCN. 9 disulfides stabilise this stretch: cysteine 224-cysteine 235, cysteine 229-cysteine 245, cysteine 247-cysteine 256, cysteine 261-cysteine 272, cysteine 266-cysteine 281, cysteine 283-cysteine 292, cysteine 305-cysteine 314, cysteine 309-cysteine 323, and cysteine 325-cysteine 334. Asparagine 371 carries N-linked (GlcNAc...) asparagine glycosylation. Disordered regions lie at residues 544–579, 592–659, and 690–739; these read FVSP…QVAT, FPTT…AIST, and PHPQ…HTSS. Over residues 551–567 the composition is skewed to acidic residues; sequence DENEEEEEDETTDETEE. Polar residues predominate over residues 570–579; the sequence is PTPSTMQVAT. Positions 597–612 are enriched in acidic residues; the sequence is DMEETDEEEDMTEEVT. The span at 626–639 shows a compositional bias: low complexity; the sequence is PSSTTFTTEAPTTT. 2 stretches are compositionally biased toward acidic residues: residues 640-655 and 705-717; these read MEEE…ESEE and IESE…ESNE. A helical membrane pass occupies residues 750–770; the sequence is IIATIALIVLGSLLLATSLFV. Over 771–811 the chain is Cytoplasmic; it reads LRYIRQSRKLHGKYNPAREEHNLSAAYAMPMSHIAKEERLI.

It is found in the membrane. Its function is as follows. Regulates pharyngeal pumping during feeding. The sequence is that of Abnormal pharyngeal pumping eat-20 (eat-20) from Caenorhabditis briggsae.